Here is a 152-residue protein sequence, read N- to C-terminus: Large ribosomal subunit protein uL15 (152 aa).

A disordered region spans residues 1-54 (MGLKLNELSPGVGAKKTAHRKGRGIGSGLGKTGGRGVKGQKSRSGSGVRRGFEG). Gly residues predominate over residues 24-37 (GIGSGLGKTGGRGV).

Belongs to the universal ribosomal protein uL15 family. In terms of assembly, part of the 50S ribosomal subunit.

In terms of biological role, binds to the 23S rRNA. The protein is Large ribosomal subunit protein uL15 of Psychrobacter sp. (strain PRwf-1).